The primary structure comprises 495 residues: Aspartyl/glutamyl-tRNA(Asn/Gln) amidotransferase subunit B (495 aa).

Belongs to the GatB/GatE family. GatB subfamily. In terms of assembly, heterotrimer of A, B and C subunits.

The enzyme catalyses L-glutamyl-tRNA(Gln) + L-glutamine + ATP + H2O = L-glutaminyl-tRNA(Gln) + L-glutamate + ADP + phosphate + H(+). The catalysed reaction is L-aspartyl-tRNA(Asn) + L-glutamine + ATP + H2O = L-asparaginyl-tRNA(Asn) + L-glutamate + ADP + phosphate + 2 H(+). In terms of biological role, allows the formation of correctly charged Asn-tRNA(Asn) or Gln-tRNA(Gln) through the transamidation of misacylated Asp-tRNA(Asn) or Glu-tRNA(Gln) in organisms which lack either or both of asparaginyl-tRNA or glutaminyl-tRNA synthetases. The reaction takes place in the presence of glutamine and ATP through an activated phospho-Asp-tRNA(Asn) or phospho-Glu-tRNA(Gln). The protein is Aspartyl/glutamyl-tRNA(Asn/Gln) amidotransferase subunit B of Beijerinckia indica subsp. indica (strain ATCC 9039 / DSM 1715 / NCIMB 8712).